The following is a 69-amino-acid chain: Pleurain-A3 (69 aa).

A signal peptide spans 1–22 (MFTLKKTLLLLFFLGTISISLC). A propeptide spanning residues 23–43 (KQARDADEDDGRKMTEEEVKR) is cleaved from the precursor. Cys63 and Cys69 are oxidised to a cystine.

It belongs to the frog skin active peptide (FSAP) family. Pleurain subfamily. Expressed by the skin glands.

The protein localises to the secreted. Antimicrobial peptide. Has activity against Gram-positive and -negative bacteria, and fungi. Has little hemolytic activity on red blood cells. This is Pleurain-A3 from Nidirana pleuraden (Yunnan pond frog).